A 278-amino-acid polypeptide reads, in one-letter code: Probable endonuclease 4 (278 aa).

The Zn(2+) site is built by histidine 70, histidine 108, glutamate 143, aspartate 176, histidine 179, histidine 210, aspartate 223, histidine 225, and glutamate 255.

This sequence belongs to the AP endonuclease 2 family. The cofactor is Zn(2+).

The catalysed reaction is Endonucleolytic cleavage to 5'-phosphooligonucleotide end-products.. Its function is as follows. Endonuclease IV plays a role in DNA repair. It cleaves phosphodiester bonds at apurinic or apyrimidinic (AP) sites, generating a 3'-hydroxyl group and a 5'-terminal sugar phosphate. The polypeptide is Probable endonuclease 4 (Mycoplasmopsis agalactiae (strain NCTC 10123 / CIP 59.7 / PG2) (Mycoplasma agalactiae)).